Consider the following 422-residue polypeptide: Probable D-serine dehydratase (422 aa).

An N6-(pyridoxal phosphate)lysine modification is found at Lys105.

This sequence belongs to the serine/threonine dehydratase family. DsdA subfamily. The cofactor is pyridoxal 5'-phosphate.

The enzyme catalyses D-serine = pyruvate + NH4(+). This chain is Probable D-serine dehydratase, found in Carboxydothermus hydrogenoformans (strain ATCC BAA-161 / DSM 6008 / Z-2901).